The following is a 490-amino-acid chain: Betaine aldehyde dehydrogenase (490 aa).

Residue asparagine 93 participates in K(+) binding. 150 to 152 (GAW) lines the NAD(+) pocket. Residue lysine 162 is the Charge relay system of the active site. NAD(+) is bound at residue 176-179 (KPSE). Valine 180 serves as a coordination point for K(+). Residue 230 to 233 (GTAT) coordinates NAD(+). Leucine 246 provides a ligand contact to K(+). The active-site Proton acceptor is glutamate 252. NAD(+) is bound by residues glycine 254, cysteine 286, and glutamate 387. Residue cysteine 286 is the Nucleophile of the active site. At cysteine 286 the chain carries Cysteine sulfenic acid (-SOH). K(+)-binding residues include lysine 457 and glycine 460. The active-site Charge relay system is the glutamate 464.

The protein belongs to the aldehyde dehydrogenase family. Dimer of dimers. The cofactor is K(+).

The enzyme catalyses betaine aldehyde + NAD(+) + H2O = glycine betaine + NADH + 2 H(+). It participates in amine and polyamine biosynthesis; betaine biosynthesis via choline pathway; betaine from betaine aldehyde: step 1/1. In terms of biological role, involved in the biosynthesis of the osmoprotectant glycine betaine. Catalyzes the irreversible oxidation of betaine aldehyde to the corresponding acid. The sequence is that of Betaine aldehyde dehydrogenase from Xanthomonas campestris pv. campestris (strain ATCC 33913 / DSM 3586 / NCPPB 528 / LMG 568 / P 25).